The sequence spans 295 residues: Phosphoribosylaminoimidazole-succinocarboxamide synthase (295 aa).

It belongs to the SAICAR synthetase family.

It catalyses the reaction 5-amino-1-(5-phospho-D-ribosyl)imidazole-4-carboxylate + L-aspartate + ATP = (2S)-2-[5-amino-1-(5-phospho-beta-D-ribosyl)imidazole-4-carboxamido]succinate + ADP + phosphate + 2 H(+). Its pathway is purine metabolism; IMP biosynthesis via de novo pathway; 5-amino-1-(5-phospho-D-ribosyl)imidazole-4-carboxamide from 5-amino-1-(5-phospho-D-ribosyl)imidazole-4-carboxylate: step 1/2. This chain is Phosphoribosylaminoimidazole-succinocarboxamide synthase, found in Halorhodospira halophila (strain DSM 244 / SL1) (Ectothiorhodospira halophila (strain DSM 244 / SL1)).